The chain runs to 560 residues: MSINRRSKNITEGVARAPNRSMYYAMGYQEADFKKPMIGVANGHSTITPCNSGLQKLADAAVEGIEAAGGNAQIFGTPTISDGMAMGTEGMKYSLVSREVIADCVETCVGGQWMDGVLVVGGCDKNMPGGMMGMLRANVPAIYVYGGTILPGKYKGQDLNIVSVFEAVGQFTAGNMSEEDFCQIERRAIPGSGSCGGMYTANTMSSAFEALGMSLPFASTMANVEDPIVAHTKEAARVLVEAVKADLKPRDIVTRKSIENAVAVIMATGGSTNAVLHFLAIAHAAGVEWTIDDFERVRRKVPVLCDLKPSGRYLAIDLHRAGGIPQVMKTLLAAGLIHGDCITITGRTVAENLADIPDAPRADQDVIRPITKPMYEQGHLAILKGNLSPEGAVAKITGLKNPSITGPARVFDDEQSALAAIMAKQIQAGDVMVLRYLGPMGGPGMPEMLAPTGALIGQGLGESVGLITDGRFSGGTWGMVVGHVAPEAAAGGTIALVQEGDSITIDAHTLVLNLNVSEAEIAKRRAAWKAPAPRYTRGVLAKFAKNASSASSGAVLDRFE.

[2Fe-2S] cluster is bound at residue Cys-50. Asp-82 contacts Mg(2+). Cys-123 provides a ligand contact to [2Fe-2S] cluster. Mg(2+) is bound by residues Asp-124 and Lys-125. Residue Lys-125 is modified to N6-carboxylysine. Cys-195 contacts [2Fe-2S] cluster. Glu-447 provides a ligand contact to Mg(2+). Catalysis depends on Ser-473, which acts as the Proton acceptor.

Belongs to the IlvD/Edd family. As to quaternary structure, homodimer. [2Fe-2S] cluster serves as cofactor. It depends on Mg(2+) as a cofactor.

The enzyme catalyses (2R)-2,3-dihydroxy-3-methylbutanoate = 3-methyl-2-oxobutanoate + H2O. The catalysed reaction is (2R,3R)-2,3-dihydroxy-3-methylpentanoate = (S)-3-methyl-2-oxopentanoate + H2O. It functions in the pathway amino-acid biosynthesis; L-isoleucine biosynthesis; L-isoleucine from 2-oxobutanoate: step 3/4. Its pathway is amino-acid biosynthesis; L-valine biosynthesis; L-valine from pyruvate: step 3/4. Its function is as follows. Functions in the biosynthesis of branched-chain amino acids. Catalyzes the dehydration of (2R,3R)-2,3-dihydroxy-3-methylpentanoate (2,3-dihydroxy-3-methylvalerate) into 2-oxo-3-methylpentanoate (2-oxo-3-methylvalerate) and of (2R)-2,3-dihydroxy-3-methylbutanoate (2,3-dihydroxyisovalerate) into 2-oxo-3-methylbutanoate (2-oxoisovalerate), the penultimate precursor to L-isoleucine and L-valine, respectively. In Methylibium petroleiphilum (strain ATCC BAA-1232 / LMG 22953 / PM1), this protein is Dihydroxy-acid dehydratase.